We begin with the raw amino-acid sequence, 447 residues long: Adenylosuccinate synthetase (447 aa).

GTP-binding positions include 12–18 (GDEGKGK) and 40–42 (GHT). Catalysis depends on Asp-13, which acts as the Proton acceptor. 2 residues coordinate Mg(2+): Asp-13 and Gly-40. IMP is bound by residues 13 to 16 (DEGK), 38 to 41 (NAGH), Thr-128, Arg-142, Gln-223, Thr-238, and Arg-302. The active-site Proton donor is His-41. 298–304 (TTTGRKR) lines the substrate pocket. Residues Arg-304, 330–332 (KLD), and 412–414 (SLG) contribute to the GTP site.

Belongs to the adenylosuccinate synthetase family. As to quaternary structure, homodimer. Requires Mg(2+) as cofactor.

Its subcellular location is the cytoplasm. It carries out the reaction IMP + L-aspartate + GTP = N(6)-(1,2-dicarboxyethyl)-AMP + GDP + phosphate + 2 H(+). It participates in purine metabolism; AMP biosynthesis via de novo pathway; AMP from IMP: step 1/2. In terms of biological role, plays an important role in the de novo pathway of purine nucleotide biosynthesis. Catalyzes the first committed step in the biosynthesis of AMP from IMP. This chain is Adenylosuccinate synthetase, found in Nostoc sp. (strain PCC 7120 / SAG 25.82 / UTEX 2576).